Reading from the N-terminus, the 365-residue chain is tRNA(Met) cytidine acetate ligase (365 aa).

ATP contacts are provided by residues 7 to 20 (IAEFNPFHNGHKYL), G96, N152, and R175.

Belongs to the TmcAL family.

It is found in the cytoplasm. It catalyses the reaction cytidine(34) in elongator tRNA(Met) + acetate + ATP = N(4)-acetylcytidine(34) in elongator tRNA(Met) + AMP + diphosphate. Catalyzes the formation of N(4)-acetylcytidine (ac(4)C) at the wobble position of elongator tRNA(Met), using acetate and ATP as substrates. First activates an acetate ion to form acetyladenylate (Ac-AMP) and then transfers the acetyl group to tRNA to form ac(4)C34. In Streptococcus pneumoniae serotype 19F (strain G54), this protein is tRNA(Met) cytidine acetate ligase.